Reading from the N-terminus, the 200-residue chain is MNSTAKLPKIILASTSPFRKALLQKLRLPFITENPAIDETPYPHESVVDMVNRLSLAKAHAVAEKHPNAIIIASDQSATYQGQAVGKPHTYPNAVQQLNQFSGETIHFNTGLVVFDNRTQKTYQTLDVTKVTFRTLSETDIHNYLILEEPYQCAGSFKSEGLGITLFSKIEGKDPNALIGLPLIDLTSFLKQCDIQLPFL.

Asp-75 acts as the Proton acceptor in catalysis.

Belongs to the Maf family. YceF subfamily. A divalent metal cation serves as cofactor.

Its subcellular location is the cytoplasm. It carries out the reaction N(7)-methyl-GTP + H2O = N(7)-methyl-GMP + diphosphate + H(+). Nucleoside triphosphate pyrophosphatase that hydrolyzes 7-methyl-GTP (m(7)GTP). May have a dual role in cell division arrest and in preventing the incorporation of modified nucleotides into cellular nucleic acids. In Hydrogenovibrio crunogenus (strain DSM 25203 / XCL-2) (Thiomicrospira crunogena), this protein is 7-methyl-GTP pyrophosphatase.